The primary structure comprises 700 residues: Tectonic-2 (700 aa).

The first 25 residues, 1–25, serve as a signal peptide directing secretion; the sequence is MGSLSPLSLLWGLLLLQGVLRPLRG. Residues 26–665 lie on the Extracellular side of the membrane; that stretch reads DPVFIPPFIR…YYQGEPQSQC (640 aa). Residues Asn-76, Asn-82, Asn-146, Asn-156, and Asn-389 are each glycosylated (N-linked (GlcNAc...) asparagine). Residues 666–682 form a helical membrane-spanning segment; sequence VAKGLMLLSLLMLAILL. Residues 683–700 lie on the Cytoplasmic side of the membrane; that stretch reads RHPWVRMCKARDSAAIYH.

This sequence belongs to the tectonic family. As to quaternary structure, part of the tectonic-like complex (also named B9 complex). In terms of tissue distribution, significant expression is observed in brain, kidney and eye.

The protein localises to the membrane. The protein resides in the cytoplasm. It localises to the cytoskeleton. Its subcellular location is the cilium basal body. Component of the tectonic-like complex, a complex localized at the transition zone of primary cilia and acting as a barrier that prevents diffusion of transmembrane proteins between the cilia and plasma membranes. Required for hedgehog signaling transduction. This is Tectonic-2 (Tctn2) from Mus musculus (Mouse).